Consider the following 139-residue polypeptide: Ribulose bisphosphate carboxylase small subunit, plasmid (139 aa).

Belongs to the RuBisCO small chain family. Heterohexadecamer of 8 large and 8 small subunits.

Functionally, ruBisCO catalyzes two reactions: the carboxylation of D-ribulose 1,5-bisphosphate, the primary event in carbon dioxide fixation, as well as the oxidative fragmentation of the pentose substrate. Both reactions occur simultaneously and in competition at the same active site. Although the small subunit is not catalytic it is essential for maximal activity. This is Ribulose bisphosphate carboxylase small subunit, plasmid from Cupriavidus necator (strain ATCC 17699 / DSM 428 / KCTC 22496 / NCIMB 10442 / H16 / Stanier 337) (Ralstonia eutropha).